We begin with the raw amino-acid sequence, 347 residues long: Spermidine/putrescine import ATP-binding protein PotA (347 aa).

Positions 6–236 (IEIKNVYKEF…PKNAFVAKFI (231 aa)) constitute an ABC transporter domain. ATP is bound at residue 38–45 (GPSGCGKT).

Belongs to the ABC transporter superfamily. Spermidine/putrescine importer (TC 3.A.1.11.1) family. As to quaternary structure, the complex is composed of two ATP-binding proteins (PotA), two transmembrane proteins (PotB and PotC) and a solute-binding protein (PotD).

Its subcellular location is the cell membrane. The enzyme catalyses ATP + H2O + polyamine-[polyamine-binding protein]Side 1 = ADP + phosphate + polyamineSide 2 + [polyamine-binding protein]Side 1.. Its function is as follows. Part of the ABC transporter complex PotABCD involved in spermidine/putrescine import. Responsible for energy coupling to the transport system. The polypeptide is Spermidine/putrescine import ATP-binding protein PotA (Clostridium novyi (strain NT)).